Consider the following 431-residue polypeptide: Transposase for insertion sequence element IS232 (431 aa).

The 60-residue stretch at 20–79 folds into the HTH IS21-type domain; it reads PNFKKLMGNLKMKINKSQLARELNVDRRTIDKYLNGFTPKGTKNKTSKIDTYYEVIAALL. Residues 35-54 constitute a DNA-binding region (H-T-H motif); that stretch reads KSQLARELNVDRRTIDKYLN. An Integrase catalytic domain is found at 140–315; it reads YETPPGEQAQ…IPVFALKQEK (176 aa).

Belongs to the transposase IS21/IS408/IS1162 family.

Functionally, involved in the transposition of the insertion sequence. The sequence is that of Transposase for insertion sequence element IS232 from Bacillus thuringiensis subsp. berliner.